A 711-amino-acid chain; its full sequence is Putative membrane protein ActII-3 (711 aa).

Transmembrane regions (helical) follow at residues 14 to 34 (LKWL…PLAG), 175 to 195 (ADFK…VVTY), 199 to 219 (LLWL…QAIV), 235 to 255 (AMIL…LLVA), 281 to 301 (AIVA…LAAL), 313 to 333 (VGVL…LVIF), 369 to 389 (AVWV…VTLN), 516 to 536 (IIPV…RALV), 540 to 560 (LLIA…ALFF), 573 to 593 (FPLW…IFLV), 623 to 643 (AGLV…VFIA), and 645 to 665 (LGFT…SVLV). The interval 685 to 711 (REDPSEDPAVSGMPDSIDSEASTTASR) is disordered.

It belongs to the resistance-nodulation-cell division (RND) (TC 2.A.6) family. MmpL subfamily.

The protein resides in the cell membrane. In Streptomyces coelicolor (strain ATCC BAA-471 / A3(2) / M145), this protein is Putative membrane protein ActII-3 (actII-3).